The following is a 469-amino-acid chain: UDP-N-acetylmuramate--L-alanine ligase (469 aa).

Position 113-119 (113-119 (GSHGKTT)) interacts with ATP.

The protein belongs to the MurCDEF family.

It localises to the cytoplasm. It carries out the reaction UDP-N-acetyl-alpha-D-muramate + L-alanine + ATP = UDP-N-acetyl-alpha-D-muramoyl-L-alanine + ADP + phosphate + H(+). The protein operates within cell wall biogenesis; peptidoglycan biosynthesis. In terms of biological role, cell wall formation. This chain is UDP-N-acetylmuramate--L-alanine ligase, found in Sorangium cellulosum (strain So ce56) (Polyangium cellulosum (strain So ce56)).